A 282-amino-acid chain; its full sequence is 3-methyl-2-oxobutanoate hydroxymethyltransferase (282 aa).

Mg(2+) is bound by residues D44 and D83. 3-methyl-2-oxobutanoate contacts are provided by residues 44–45 (DS), D83, and K113. Residue E115 participates in Mg(2+) binding. Residue E182 is the Proton acceptor of the active site.

This sequence belongs to the PanB family. Homodecamer; pentamer of dimers. Mg(2+) serves as cofactor.

Its subcellular location is the cytoplasm. It catalyses the reaction 3-methyl-2-oxobutanoate + (6R)-5,10-methylene-5,6,7,8-tetrahydrofolate + H2O = 2-dehydropantoate + (6S)-5,6,7,8-tetrahydrofolate. The protein operates within cofactor biosynthesis; (R)-pantothenate biosynthesis; (R)-pantoate from 3-methyl-2-oxobutanoate: step 1/2. Catalyzes the reversible reaction in which hydroxymethyl group from 5,10-methylenetetrahydrofolate is transferred onto alpha-ketoisovalerate to form ketopantoate. This chain is 3-methyl-2-oxobutanoate hydroxymethyltransferase, found in Dehalococcoides mccartyi (strain ATCC BAA-2266 / KCTC 15142 / 195) (Dehalococcoides ethenogenes (strain 195)).